Reading from the N-terminus, the 30-residue chain is Truncated interleukin-1-binding protein (30 aa).

An N-terminal signal peptide occupies residues 1-18 (MSILPVIFLPIFFYSSFV).

The protein belongs to the interleukin-1 receptor family.

The chain is Truncated interleukin-1-binding protein from Vaccinia virus (strain Copenhagen) (VACV).